The primary structure comprises 618 residues: Dihydroxy-acid dehydratase (618 aa).

A Mg(2+)-binding site is contributed by Asp-81. Cys-122 lines the [2Fe-2S] cluster pocket. Mg(2+) contacts are provided by Asp-123 and Lys-124. Lys-124 bears the N6-carboxylysine mark. [2Fe-2S] cluster is bound at residue Cys-195. Glu-493 serves as a coordination point for Mg(2+). The active-site Proton acceptor is Ser-519.

This sequence belongs to the IlvD/Edd family. In terms of assembly, homodimer. Requires [2Fe-2S] cluster as cofactor. It depends on Mg(2+) as a cofactor.

The enzyme catalyses (2R)-2,3-dihydroxy-3-methylbutanoate = 3-methyl-2-oxobutanoate + H2O. It carries out the reaction (2R,3R)-2,3-dihydroxy-3-methylpentanoate = (S)-3-methyl-2-oxopentanoate + H2O. It functions in the pathway amino-acid biosynthesis; L-isoleucine biosynthesis; L-isoleucine from 2-oxobutanoate: step 3/4. Its pathway is amino-acid biosynthesis; L-valine biosynthesis; L-valine from pyruvate: step 3/4. Functionally, functions in the biosynthesis of branched-chain amino acids. Catalyzes the dehydration of (2R,3R)-2,3-dihydroxy-3-methylpentanoate (2,3-dihydroxy-3-methylvalerate) into 2-oxo-3-methylpentanoate (2-oxo-3-methylvalerate) and of (2R)-2,3-dihydroxy-3-methylbutanoate (2,3-dihydroxyisovalerate) into 2-oxo-3-methylbutanoate (2-oxoisovalerate), the penultimate precursor to L-isoleucine and L-valine, respectively. This is Dihydroxy-acid dehydratase from Shewanella amazonensis (strain ATCC BAA-1098 / SB2B).